Consider the following 1483-residue polypeptide: Cystic fibrosis transmembrane conductance regulator (1483 aa).

Residues 1–77 lie on the Cytoplasmic side of the membrane; it reads MQRSPLEKAS…KLINALRRCF (77 aa). A helical membrane pass occupies residues 78-98; sequence FWKFMFYGILLYLGEVTKAVQ. The region spanning 81-365 is the ABC transmembrane type-1 1 domain; that stretch reads FMFYGILLYL…WAVQTWYDSL (285 aa). The Extracellular segment spans residues 99 to 122; that stretch reads PLLLGRIIASYDPDNKVERSIAIY. The chain crosses the membrane as a helical span at residues 123–146; the sequence is LGIGLCLLFVVRTLLLHPAIFGLH. Residues 147-195 lie on the Cytoplasmic side of the membrane; that stretch reads HIGMQMRIAMFSLIYKKTLKLSSRVLDKISIGQLISLLSNNLNKFDEGL. The chain crosses the membrane as a helical span at residues 196–216; it reads ALAHFVWIVPLQVTLLMGLLW. Topologically, residues 217-222 are extracellular; that stretch reads ELLQAS. The helical transmembrane segment at 223–243 threads the bilayer; that stretch reads AFCGLAFLIIVAFYQAGLGRM. Topologically, residues 244–298 are cytoplasmic; the sequence is MMKYRDKRGGKINERLVITSEMIENIQSVKAYCWEEAMEKMIENLRQTELKLTRK. The helical transmembrane segment at 299–319 threads the bilayer; that stretch reads AAYVRYCNSSAFFFSGFFVVF. Residues 320-339 lie on the Extracellular side of the membrane; that stretch reads LSVLPYALMKGIILRKIFTT. Residues 340 to 358 traverse the membrane as a helical segment; sequence ISFCIVLRMAVTRQFPWAV. Residues 359–859 lie on the Cytoplasmic side of the membrane; it reads QTWYDSLGAI…YLRYITIHKS (501 aa). Residues W401, S434, 458 to 465, and Q493 contribute to the ATP site; that span reads GSTGAGKT. An ABC transporter 1 domain is found at 423 to 646; the sequence is NGDNSLFFSN…RPDFSSKLMG (224 aa). C524 carries the S-palmitoyl cysteine lipid modification. 2 positions are modified to phosphoserine: S549 and S660. The tract at residues 654–832 is disordered R region; that stretch reads SAERRNSILT…EEINEEDLKE (179 aa). S670 is modified (phosphoserine; by PKA). S686 is subject to Phosphoserine. A Glycyl lysine isopeptide (Lys-Gly) (interchain with G-Cter in ubiquitin) cross-link involves residue K688. A phosphoserine mark is found at S700 and S712. Position 717 is a phosphothreonine (T717). Phosphoserine is present on residues S737, S768, S791, S796, and S814. A helical transmembrane segment spans residues 860–880; it reads LIFVLIWCLIIFLAEVAVSLV. The ABC transmembrane type-1 2 domain occupies 860–1157; that stretch reads LIFVLIWCLI…AVNSSIDVDS (298 aa). The Extracellular segment spans residues 881–920; the sequence is FLLLFEKSPRQDTGNVTKSSNNSSYGVIITNTSSYYIIYI. N895, N901, N902, and N911 each carry an N-linked (GlcNAc...) asparagine glycan. Residues 921 to 941 traverse the membrane as a discontinuously helical segment; that stretch reads YVGVADTLLALGLLRGLPLVH. Over 942-992 the chain is Cytoplasmic; that stretch reads TLITASKILHHKMLHSVLQAPMSTLNTLKAGGILNRFSKDIAILDDLLPLT. The chain crosses the membrane as a helical span at residues 993-1013; it reads IFDFIQLILIVIGAVIVVSVL. The Extracellular segment spans residues 1014–1015; that stretch reads EP. Residues 1016 to 1036 traverse the membrane as a helical segment; it reads YIFLATVPVIIAFVMLRAYFL. Topologically, residues 1037 to 1097 are cytoplasmic; the sequence is HTSQQLKQLE…TANWFLYLST (61 aa). Residues 1098–1118 form a helical membrane-spanning segment; sequence LRWFQMRIEMIFVIFFIAVTF. Over 1119 to 1132 the chain is Extracellular; that stretch reads ISILTTGDGEGRVG. Residues 1133–1153 form a helical membrane-spanning segment; it reads IILTLAMNIMNTLQWAVNSSI. Residues 1154–1483 are Cytoplasmic-facing; that stretch reads DVDSLMRSVS…TEEEVQETRL (330 aa). The region spanning 1213 to 1446 is the ABC transporter 2 domain; it reads MTVKDLTAKY…KSLFRQAISN (234 aa). Residues Y1222 and 1247–1254 contribute to the ATP site; that span reads GRTGSGKS. The interaction with GORASP2 stretch occupies residues 1389-1483; that stretch reads RTIKQAFADC…TEEEVQETRL (95 aa). Residue C1398 is the site of S-palmitoyl cysteine attachment. Phosphoserine occurs at positions 1447 and 1459. The span at 1455 to 1465 shows a compositional bias: basic residues; it reads HRNSSKHKSRS. The disordered stretch occupies residues 1455-1483; sequence HRNSSKHKSRSKIAALKEETEEEVQETRL. The span at 1473 to 1483 shows a compositional bias: acidic residues; the sequence is ETEEEVQETRL. Positions 1481–1483 match the PDZ-binding motif; the sequence is TRL.

The protein belongs to the ABC transporter superfamily. ABCC family. CFTR transporter (TC 3.A.1.202) subfamily. Monomer; does not require oligomerization for channel activity. May form oligomers in the membrane. Interacts with SLC26A3, SLC26A6 and NHERF1. Interacts with SHANK2. Interacts with MYO6. Interacts (via C-terminus) with GOPC (via PDZ domain); this promotes CFTR internalization and thereby decreases channel activity. Interacts with SLC4A7 through NHERF1. Found in a complex with MYO5B and RAB11A. Interacts with ANO1. Interacts with SLC26A8. Interacts with AHCYL1; the interaction increases CFTR activity. Interacts with CSE1L. The core-glycosylated form interacts with GORASP2 (via PDZ GRASP-type 1 domain) in respone to ER stress. Interacts with MARCHF2; the interaction leads to CFTR ubiqtuitination and degradation. Interacts with ADGRG2. Post-translationally, N-glycosylated. In terms of processing, phosphorylated; cAMP treatment promotes phosphorylation and activates the channel. Dephosphorylation decreases the ATPase activity (in vitro). Phosphorylation at PKA sites activates the channel. Phosphorylation at PKC sites enhances the response to phosphorylation by PKA. Phosphorylated by AMPK; this inhibits channel activity. Ubiquitinated, leading to its degradation in the lysosome. Deubiquitination by USP10 in early endosomes enhances its endocytic recycling to the cell membrane. Ubiquitinated by RNF185 during ER stress. Ubiquitinated by MARCHF2.

Its subcellular location is the apical cell membrane. The protein resides in the early endosome membrane. The protein localises to the cell membrane. It is found in the recycling endosome membrane. It localises to the endoplasmic reticulum membrane. Its subcellular location is the nucleus. The enzyme catalyses ATP + H2O + closed Cl(-) channel = ADP + phosphate + open Cl(-) channel.. It carries out the reaction chloride(in) = chloride(out). The catalysed reaction is hydrogencarbonate(in) = hydrogencarbonate(out). It catalyses the reaction ATP + H2O = ADP + phosphate + H(+). Epithelial ion channel that plays an important role in the regulation of epithelial ion and water transport and fluid homeostasis. Mediates the transport of chloride ions across the cell membrane. The ion channel is also permeable to HCO(3)(-); selectivity depends on the extracellular chloride concentration. Exerts its function also by modulating the activity of other ion channels and transporters. Contributes to the regulation of the pH and the ion content of the epithelial fluid layer. Modulates the activity of the epithelial sodium channel (ENaC) complex, in part by regulating the cell surface expression of the ENaC complex. May regulate bicarbonate secretion and salvage in epithelial cells by regulating the transporter SLC4A7. Can inhibit the chloride channel activity of ANO1. Plays a role in the chloride and bicarbonate homeostasis during sperm epididymal maturation and capacitation. This is Cystic fibrosis transmembrane conductance regulator from Atelerix albiventris (Middle-African hedgehog).